A 316-amino-acid chain; its full sequence is Replication initiation protein (316 aa).

This sequence belongs to the initiator RepB protein family.

The polypeptide is Replication initiation protein (repA) (Escherichia coli).